We begin with the raw amino-acid sequence, 579 residues long: Tetratricopeptide repeat protein 39C (579 aa).

Residues 182–197 (QQGALASDQANHNTST) are compositionally biased toward polar residues. The segment at 182–202 (QQGALASDQANHNTSTGSGGR) is disordered. TPR repeat units lie at residues 311–344 (SLFI…ASDQ), 349–382 (HVCL…SRWS), and 481–514 (GLKH…EYGR).

It belongs to the TTC39 family.

The sequence is that of Tetratricopeptide repeat protein 39C (ttc39c) from Danio rerio (Zebrafish).